The sequence spans 315 residues: Ornithine carbamoyltransferase, anabolic (315 aa).

Residues 57–60, Gln84, Arg108, and 135–138 each bind carbamoyl phosphate; these read STRT and HPCQ. L-ornithine is bound by residues Asn166, Asp230, and 234-235; that span reads SM. Carbamoyl phosphate contacts are provided by residues 270–271 and Arg298; that span reads CL.

Belongs to the aspartate/ornithine carbamoyltransferase superfamily. OTCase family. Homododecamer (tetramer of trimers).

It localises to the cytoplasm. The enzyme catalyses carbamoyl phosphate + L-ornithine = L-citrulline + phosphate + H(+). It functions in the pathway amino-acid biosynthesis; L-arginine biosynthesis; L-arginine from L-ornithine and carbamoyl phosphate: step 1/3. Its activity is regulated as follows. Inhibited by the bisubstrate delta-N-phosphonoacetyl-L-ornithine (PALO). Its function is as follows. Reversibly catalyzes the transfer of the carbamoyl group from carbamoyl phosphate (CP) to the N(epsilon) atom of ornithine (ORN) to produce L-citrulline, which is a substrate for argininosuccinate synthetase, the enzyme involved in the final step in arginine biosynthesis. In Pyrococcus furiosus (strain ATCC 43587 / DSM 3638 / JCM 8422 / Vc1), this protein is Ornithine carbamoyltransferase, anabolic.